We begin with the raw amino-acid sequence, 317 residues long: Glucose-6-phosphate isomerase, cytosolic 2B (317 aa).

Glu-108 acts as the Proton donor in catalysis. Catalysis depends on residues His-139 and Lys-264.

Belongs to the GPI family. Homodimer.

Its subcellular location is the cytoplasm. The enzyme catalyses alpha-D-glucose 6-phosphate = beta-D-fructose 6-phosphate. Its pathway is carbohydrate degradation; glycolysis; D-glyceraldehyde 3-phosphate and glycerone phosphate from D-glucose: step 2/4. The sequence is that of Glucose-6-phosphate isomerase, cytosolic 2B (PGIC2-B) from Clarkia lewisii (Farewell-to-spring).